The sequence spans 323 residues: Forkhead transcription factor fkh-6 (323 aa).

Residues 21 to 122 (KPPYSYVALI…DNGNFKRRRV (102 aa)) constitute a DNA-binding region (fork-head).

It is found in the nucleus. Probable transcription factor. Binds to the DNA sequence motif 5'-[TA]TGTT[TG]T[TG][ATG]TT-3'. Regulates sexual dimorphism in the gonad, promoting male gonadal cell fates in chromosomally (XO) male animals, yet plays a role in gonadogenesis in both sexes; probably acts downstream of terminal regulator of sex determination tra-1, to control early gonadogenesis. Positively modulates expression of homeobox protein egl-5, probably acting indirectly, during early gonadal development. The protein is Forkhead transcription factor fkh-6 of Caenorhabditis elegans.